A 798-amino-acid polypeptide reads, in one-letter code: Bromodomain-containing protein 2 (798 aa).

At Met1 the chain carries N-acetylmethionine. A disordered region spans residues 1–21; that stretch reads MLQNVTPHKLPGEGNAGLLGL. Residue Thr6 is modified to Phosphothreonine. Ser36 is modified (phosphoserine). The disordered stretch occupies residues 53 to 72; it reads LQLAPANPPPPEVSNPKKPG. The region spanning 73–179 is the Bromo 1 domain; it reads RVTNQLQYLH…KIFLQKVASM (107 aa). Residues Asp111, Tyr154, Asn155, Lys156, Asp159, and Asp160 each coordinate a protein. Disordered regions lie at residues 267–348, 454–645, and 736–798; these read PPAQ…LSEQ, DEPL…YDEK, and KRLQ…SDSG. Residues 284–297 show a composition bias toward low complexity; the sequence is TTTPTPTAILAPGS. Residues Ser297, Ser300, and Ser304 each carry the phosphoserine modification. The span at 315–331 shows a compositional bias: basic and acidic residues; that stretch reads MRRESGRPIKPPRKDLP. Residues 343-452 enclose the Bromo 2 domain; it reads GKLSEQLKHC…DVFEFRYAKM (110 aa). The segment covering 480–512 has biased composition (acidic residues); the sequence is SSEESSSESSSEEEEEEEEDEDEEESESSDSEE. Residues 542-564 are compositionally biased toward basic residues; sequence KPKRKREKKEKKKKRKAEKHRGR. Residues 553 to 557 carry the Nuclear localization signal motif; the sequence is KKKRK. In terms of domain architecture, NET spans 630–712; that stretch reads DSEEEEESRP…SCLRKKPRKP (83 aa). At Ser631 the chain carries Phosphoserine. Over residues 772–792 the composition is skewed to low complexity; the sequence is SASSSSSDSSSSSSSSSSSDT.

This sequence belongs to the BET family. In terms of assembly, homodimer. Interacts with E2F1. Interacts with (acetylated) STAT3; promoting STAT3 recruitment to chromatin. Interacts with CTCF; promoting BRD2 recruitment to chromatin. Predominantly expressed in the testis, followed by ovary, placenta, embryo and to a lower extent in somatic tissues.

The protein localises to the nucleus. It is found in the chromosome. In terms of biological role, chromatin reader protein that specifically recognizes and binds histone H4 acetylated at 'Lys-5' and 'Lys-12' (H4K5ac and H4K12ac, respectively), thereby controlling gene expression and remodeling chromatin structures. Recruits transcription factors and coactivators to target gene sites, and activates RNA polymerase II machinery for transcriptional elongation. Plays a key role in genome compartmentalization via its association with CTCF and cohesin: recruited to chromatin by CTCF and promotes formation of topologically associating domains (TADs) via its ability to bind acetylated histones, contributing to CTCF boundary formation and enhancer insulation. Also recognizes and binds acetylated non-histone proteins, such as STAT3. Involved in inflammatory response by regulating differentiation of naive CD4(+) T-cells into T-helper Th17: recognizes and binds STAT3 acetylated at 'Lys-87', promoting STAT3 recruitment to chromatin. In addition to acetylated lysines, also recognizes and binds lysine residues on histones that are both methylated and acetylated on the same side chain to form N6-acetyl-N6-methyllysine (Kacme), an epigenetic mark of active chromatin associated with increased transcriptional initiation. Specifically binds histone H4 acetyl-methylated at 'Lys-5' and 'Lys-12' (H4K5acme and H4K12acme, respectively). The protein is Bromodomain-containing protein 2 of Mus musculus (Mouse).